The following is a 436-amino-acid chain: Trigger factor (436 aa).

The PPIase FKBP-type domain maps to 163–248; the sequence is TDRVIIDFAG…VKNVAEAILP (86 aa).

This sequence belongs to the FKBP-type PPIase family. Tig subfamily.

It is found in the cytoplasm. The enzyme catalyses [protein]-peptidylproline (omega=180) = [protein]-peptidylproline (omega=0). In terms of biological role, involved in protein export. Acts as a chaperone by maintaining the newly synthesized protein in an open conformation. Functions as a peptidyl-prolyl cis-trans isomerase. This chain is Trigger factor, found in Laribacter hongkongensis (strain HLHK9).